A 576-amino-acid chain; its full sequence is Protein HYPER-SENSITIVITY-RELATED 4 (576 aa).

Residues 55–75 (LATAKTVLTTAASVAATAMLA) form a helical membrane-spanning segment. 306–313 (GPPGTGKS) is a binding site for ATP. The tract at residues 508–532 (DKAKTEKQELENKKKTKEGTDSVVK) is disordered.

This sequence belongs to the AAA ATPase family. BCS1 subfamily. In terms of assembly, binds to the Yariv phenylglycoside (beta-D-Glc)(3). It depends on Mg(2+) as a cofactor.

The protein localises to the membrane. It carries out the reaction ATP + H2O = ADP + phosphate + H(+). The sequence is that of Protein HYPER-SENSITIVITY-RELATED 4 from Arabidopsis thaliana (Mouse-ear cress).